The sequence spans 855 residues: Mitofusin FZO1 (855 aa).

The segment covering 1-19 (MSEGKQQFKDSNKPHKDST) has biased composition (basic and acidic residues). Positions 1–27 (MSEGKQQFKDSNKPHKDSTDQDDDAAT) are disordered. The Cytoplasmic segment spans residues 1 to 705 (MSEGKQQFKD…PSLLFTSKIP (705 aa)). The HRN stretch occupies residues 91 to 190 (NYNNNRVLLK…KRVDDVSSKV (100 aa)). The Dynamin-type G domain maps to 184-467 (DDVSSKVFIT…KKRSLSKLLP (284 aa)). Residues 197–202 (NTGKSA) and 370–373 (KKFD) each bind GTP. Lysine 398 is covalently cross-linked (Glycyl lysine isopeptide (Lys-Gly) (interchain with G-Cter in ubiquitin)). Serine 408 contacts GTP. Residues 413–433 (ELPHYHNENDNEDHGDRKPDD) are compositionally biased toward basic and acidic residues. The disordered stretch occupies residues 413-447 (ELPHYHNENDNEDHGDRKPDDDPYSSSDPDPDFDS). Lysine 464 participates in a covalent cross-link: Glycyl lysine isopeptide (Lys-Gly) (interchain with G-Cter in ubiquitin). Residues 484-547 (KSNMKMYSEE…KEALLNALDV (64 aa)) form an HR1 region. The interval 630-843 (GKRLKVSLSI…QSLYEGTVAQ (214 aa)) is required for interaction with UGO1. The chain crosses the membrane as a helical span at residues 706–726 (TLTLYFLGSTKVVGNIILNGI). At 727-736 (KLSSWSSLKK) the chain is on the mitochondrial intermembrane side. The helical transmembrane segment at 737–757 (LSVPVIVVGSLLGLTYLIHDL) threads the bilayer. Over 758-855 (PRALPMNLSI…MVEEINLDID (98 aa)) the chain is Cytoplasmic. Residues 769-831 (YKRKLQELDY…KKESNLLSIK (63 aa)) form an HR2 region. The stretch at 798 to 825 (TREILRSCEIIMDKKQITKKELENKKES) forms a coiled coil.

Belongs to the TRAFAC class dynamin-like GTPase superfamily. Dynamin/Fzo/YdjA family. Mitofusin subfamily. Homodimer. Dimerization depends on GTP binding. Component of a large multiprotein complex of 800 kDa. Binds the cytoplasmic domain of UGO1 which binds MGM1 through its intermembrane space domain. Interacts with MDM30. Interacts with UBP2 and UBP12. Interacts (when ubiquitinated) with DOA1; the interaction recruits FZO1 to CDC48 and promotes FZO1 proteasomal degradation. Ubiquitinated at Lys-398 and Lys-464. MDM30 and UGO1 are involved in ubiquitination. Deubiquitinated by UBP2 and UBP12. UBP2 and UBP12 recognize distinct ubiquitin chains on FZO1 that have opposing effects on mitochondrial fusion. UBP2 removes ubiquitin chains that initiate proteolysis of FZO1 and inhibit fusion. UBP12 recognizes ubiquitin chains that stabilize FZO1 and promote mitochondrial fusion. UBP12 deubiquitylates FZO1 only after oligomerization.

Its subcellular location is the mitochondrion outer membrane. The enzyme catalyses GTP + H2O = GDP + phosphate + H(+). Essential transmembrane GTPase, which mediates mitochondrial fusion. Fusion proceeds through several steps; first mitochondria are tethered together, then brought into close contact, followed by the formation of a docking ring around contact areas, and finally membrane fusion. Fusion of mitochondria occurs in many cell types and constitutes an important step in mitochondrial morphology, which is balanced between fusion and fission, mediated by FZO1 and DNM1, respectively. Functions antagonistically with DNM1. Probably acts by forming membrane contact sites that mediate mitochondrial membrane fusion. Mitochondrial docking and fusion requires GTP hydrolysis. Mitochondrial fusion also promotes increased lifespan. This Saccharomyces cerevisiae (strain ATCC 204508 / S288c) (Baker's yeast) protein is Mitofusin FZO1 (FZO1).